A 322-amino-acid chain; its full sequence is Tyrosine recombinase XerC (322 aa).

The segment at 1–25 (MPEAAPPVADARGSSPTATTGPGAD) is disordered. Positions 16–25 (PTATTGPGAD) are enriched in low complexity. Residues 25-111 (DATLSAVEPF…ACRSYYAWLL (87 aa)) form the Core-binding (CB) domain. In terms of domain architecture, Tyr recombinase spans 132-309 (KLPQVLDADE…DFQHLAKVYD (178 aa)). Catalysis depends on residues R171, K195, H261, R264, and H287. Catalysis depends on Y296, which acts as the O-(3'-phospho-DNA)-tyrosine intermediate.

It belongs to the 'phage' integrase family. XerC subfamily. Forms a cyclic heterotetrameric complex composed of two molecules of XerC and two molecules of XerD.

The protein localises to the cytoplasm. Functionally, site-specific tyrosine recombinase, which acts by catalyzing the cutting and rejoining of the recombining DNA molecules. The XerC-XerD complex is essential to convert dimers of the bacterial chromosome into monomers to permit their segregation at cell division. It also contributes to the segregational stability of plasmids. This chain is Tyrosine recombinase XerC, found in Xanthomonas campestris pv. campestris (strain 8004).